The sequence spans 450 residues: Putative zinc metalloprotease PA3649 (450 aa).

Zn(2+) is bound at residue His-21. Glu-22 is an active-site residue. Residue His-25 coordinates Zn(2+). A helical membrane pass occupies residues 97–119 (IAIVAAGPIANFLLAILFFWVVA). The PDZ domain occupies 199-291 (GWLKGEDNPD…VLDVALELAV (93 aa)). The chain crosses the membrane as a helical span at residues 425–444 (AWGMQIGISLVVGVMLLALV).

It belongs to the peptidase M50B family. It depends on Zn(2+) as a cofactor.

The protein resides in the cell inner membrane. This Pseudomonas aeruginosa (strain ATCC 15692 / DSM 22644 / CIP 104116 / JCM 14847 / LMG 12228 / 1C / PRS 101 / PAO1) protein is Putative zinc metalloprotease PA3649.